The sequence spans 315 residues: HPr kinase/phosphorylase (315 aa).

Catalysis depends on residues His-140 and Lys-161. 155–162 (GDSGVGKS) is an ATP binding site. Ser-162 provides a ligand contact to Mg(2+). Asp-179 functions as the Proton acceptor; for phosphorylation activity. Proton donor; for dephosphorylation activity in the catalytic mechanism. The important for the catalytic mechanism of both phosphorylation and dephosphorylation stretch occupies residues 203 to 212 (LEIRGIGIID). Glu-204 contacts Mg(2+). Residue Arg-245 is part of the active site. Residues 266–271 (PVKTGR) are important for the catalytic mechanism of dephosphorylation.

This sequence belongs to the HPrK/P family. In terms of assembly, homohexamer. Mg(2+) is required as a cofactor.

It catalyses the reaction [HPr protein]-L-serine + ATP = [HPr protein]-O-phospho-L-serine + ADP + H(+). The catalysed reaction is [HPr protein]-O-phospho-L-serine + phosphate + H(+) = [HPr protein]-L-serine + diphosphate. Catalyzes the ATP- as well as the pyrophosphate-dependent phosphorylation of a specific serine residue in HPr, a phosphocarrier protein of the phosphoenolpyruvate-dependent sugar phosphotransferase system (PTS). HprK/P also catalyzes the pyrophosphate-producing, inorganic phosphate-dependent dephosphorylation (phosphorolysis) of seryl-phosphorylated HPr (P-Ser-HPr). The two antagonistic activities of HprK/P are regulated by several intracellular metabolites, which change their concentration in response to the absence or presence of rapidly metabolisable carbon sources (glucose, fructose, etc.) in the growth medium. Therefore, by controlling the phosphorylation state of HPr, HPrK/P is a sensor enzyme that plays a major role in the regulation of carbon metabolism and sugar transport: it mediates carbon catabolite repression (CCR), and regulates PTS-catalyzed carbohydrate uptake and inducer exclusion. This is HPr kinase/phosphorylase from Lactiplantibacillus plantarum (strain ATCC BAA-793 / NCIMB 8826 / WCFS1) (Lactobacillus plantarum).